The primary structure comprises 134 residues: Small ribosomal subunit protein uS9 (134 aa).

Positions Lys-109–Arg-134 are disordered. Residues Lys-115–Arg-134 are compositionally biased toward basic residues.

It belongs to the universal ribosomal protein uS9 family.

The sequence is that of Small ribosomal subunit protein uS9 from Methanopyrus kandleri (strain AV19 / DSM 6324 / JCM 9639 / NBRC 100938).